We begin with the raw amino-acid sequence, 61 residues long: Large ribosomal subunit protein bL32 (61 aa).

Residues 1–22 (MAVPKKKTSRARRDRRRSHHAL) show a composition bias toward basic residues. Residues 1-24 (MAVPKKKTSRARRDRRRSHHALRG) form a disordered region.

This sequence belongs to the bacterial ribosomal protein bL32 family.

This Rubrobacter xylanophilus (strain DSM 9941 / JCM 11954 / NBRC 16129 / PRD-1) protein is Large ribosomal subunit protein bL32.